The sequence spans 595 residues: Alginate biosynthesis sensor protein KinB (595 aa).

Residues 1–12 lie on the Cytoplasmic side of the membrane; it reads MSMPLPMKLRTR. Residues 13–33 form a helical membrane-spanning segment; sequence LFLSISALITVSLFGLLLGLF. The Periplasmic portion of the chain corresponds to 34–167; it reads SVMQLGRAQE…SDAETSARHR (134 aa). The helical transmembrane segment at 168-188 threads the bilayer; the sequence is AYLVAGLLGLVGVAILLIGFV. Over 189–595 the chain is Cytoplasmic; that stretch reads TAHSIARRFG…GARFYMLLPV (407 aa). One can recognise an HAMP domain in the interval 195–247; the sequence is RRFGAPIETLARAADRIGEGDFDVTLPMTNVAEVGQLTRRFGLMAEALRQYRK. The PAS domain occupies 258–323; that stretch reads RRLQAVLDSI…AVEKALLGEV (66 aa). Positions 327 to 369 constitute a PAC domain; it reads AMPDLVVDVAGESRLLAWSLYPVTHPGGHSVGAVLVVRDVTEQ. The Histidine kinase domain maps to 382–595; that stretch reads RASHELRTPV…GARFYMLLPV (214 aa). At His-385 the chain carries Phosphohistidine; by autocatalysis.

Autophosphorylated.

It is found in the cell inner membrane. It carries out the reaction ATP + protein L-histidine = ADP + protein N-phospho-L-histidine.. Member of the two-component regulatory system AlgB/KinB involved in regulation of alginate biosynthesis genes. KinB functions as a membrane-associated protein kinase that phosphorylates AlgB, probably in response to environmental signals. The protein is Alginate biosynthesis sensor protein KinB (kinB) of Pseudomonas aeruginosa.